The primary structure comprises 283 residues: NFU1 iron-sulfur cluster scaffold homolog, mitochondrial (283 aa).

A mitochondrion-targeting transit peptide spans 1 to 30; it reads MSKFLSQAALNTLRNTRLGSRQLVRSFAGI. The segment at 182–250 is nifU; the sequence is IKELLDTRIR…IPEVESVEQV (69 aa). C219 and C222 together coordinate [4Fe-4S] cluster.

This sequence belongs to the NifU family.

The protein resides in the mitochondrion. Molecular scaffold for [Fe-S] cluster assembly of mitochondrial iron-sulfur proteins. The protein is NFU1 iron-sulfur cluster scaffold homolog, mitochondrial of Drosophila erecta (Fruit fly).